The following is a 340-amino-acid chain: Flap endonuclease 1 (340 aa).

Residues 1–98 (MGVDLGGLVE…ETIKARAEVR (98 aa)) form an N-domain region. Mg(2+)-binding residues include Asp-27, Asp-80, Glu-151, Glu-153, Asp-172, Asp-174, and Asp-235. The interval 115 to 256 (EAYKYAQAST…TALKLVKKHG (142 aa)) is I-domain. The interval 332-340 (KQKTLSSWF) is interaction with PCNA.

Belongs to the XPG/RAD2 endonuclease family. FEN1 subfamily. As to quaternary structure, interacts with PCNA. PCNA stimulates the nuclease activity without altering cleavage specificity. Mg(2+) is required as a cofactor.

Structure-specific nuclease with 5'-flap endonuclease and 5'-3' exonuclease activities involved in DNA replication and repair. During DNA replication, cleaves the 5'-overhanging flap structure that is generated by displacement synthesis when DNA polymerase encounters the 5'-end of a downstream Okazaki fragment. Binds the unpaired 3'-DNA end and kinks the DNA to facilitate 5' cleavage specificity. Cleaves one nucleotide into the double-stranded DNA from the junction in flap DNA, leaving a nick for ligation. Also involved in the base excision repair (BER) pathway. Acts as a genome stabilization factor that prevents flaps from equilibrating into structures that lead to duplications and deletions. Also possesses 5'-3' exonuclease activity on nicked or gapped double-stranded DNA. The chain is Flap endonuclease 1 from Methanocella arvoryzae (strain DSM 22066 / NBRC 105507 / MRE50).